Reading from the N-terminus, the 325-residue chain is Ribonucleoside-diphosphate reductase subunit beta (325 aa).

Residues Asp73, Glu104, and His107 each coordinate Fe cation. Tyr111 is a catalytic residue. The Fe cation site is built by Glu164, Glu198, and His201.

This sequence belongs to the ribonucleoside diphosphate reductase small chain family. In terms of assembly, tetramer of two alpha and two beta subunits. It depends on Fe cation as a cofactor.

The catalysed reaction is a 2'-deoxyribonucleoside 5'-diphosphate + [thioredoxin]-disulfide + H2O = a ribonucleoside 5'-diphosphate + [thioredoxin]-dithiol. Its function is as follows. Provides the precursors necessary for DNA synthesis. Catalyzes the biosynthesis of deoxyribonucleotides from the corresponding ribonucleotides. The polypeptide is Ribonucleoside-diphosphate reductase subunit beta (nrdF) (Mycobacterium leprae (strain TN)).